Consider the following 164-residue polypeptide: Two-component response regulator ARR16 (164 aa).

The 131-residue stretch at 30 to 160 folds into the Response regulatory domain; the sequence is HVLAVDDNLI…DVEKLKCHLM (131 aa). Residue D93 is modified to 4-aspartylphosphate.

This sequence belongs to the ARR family. Type-A subfamily. Post-translationally, two-component system major event consists of a His-to-Asp phosphorelay between a sensor histidine kinase (HK) and a response regulator (RR). In plants, the His-to-Asp phosphorelay involves an additional intermediate named Histidine-containing phosphotransfer protein (HPt). This multistep phosphorelay consists of a His-Asp-His-Asp sequential transfer of a phosphate group between first a His and an Asp of the HK protein, followed by the transfer to a conserved His of the HPt protein and finally the transfer to an Asp in the receiver domain of the RR protein.

It is found in the nucleus. In terms of biological role, functions as a response regulator involved in His-to-Asp phosphorelay signal transduction system. Phosphorylation of the Asp residue in the receiver domain activates the ability of the protein to promote the transcription of target genes. Type-A response regulators seem to act as negative regulators of the cytokinin signaling. This chain is Two-component response regulator ARR16 (ARR16), found in Arabidopsis thaliana (Mouse-ear cress).